Here is a 285-residue protein sequence, read N- to C-terminus: Small ribosomal subunit protein uS2 (285 aa).

The disordered stretch occupies residues 228-285; it reads RAGLSADKDAKPEAGAGEPLAEWEQELLSQAAPAAEAEAAPAAEAEAAPAAEAPATEA. Over residues 258–285 the composition is skewed to low complexity; sequence AAPAAEAEAAPAAEAEAAPAAEAPATEA.

This sequence belongs to the universal ribosomal protein uS2 family.

In Rhodococcus erythropolis (strain PR4 / NBRC 100887), this protein is Small ribosomal subunit protein uS2.